A 1118-amino-acid polypeptide reads, in one-letter code: Pleckstrin homology domain-containing family A member 7 (1118 aa).

WW domains lie at 8-41 (DTLPEHWSYGVCRDGRVFFINDQLRCTTWLHPRT) and 53-86 (SDLPRGWEEGFTEEGASFFIDHNQQTTTFRHPVT). Residues 100–113 (EEPHPHMSKPERNQ) show a composition bias toward basic and acidic residues. The tract at residues 100–145 (EEPHPHMSKPERNQRPSSMVSETSTAGTTSTLEAKPGPKIVKSSSK) is disordered. Over residues 114–131 (RPSSMVSETSTAGTTSTL) the composition is skewed to polar residues. The PH domain occupies 163-281 (PVVVRGWLHK…WVRAMNQAAQ (119 aa)). 2 stretches are compositionally biased toward basic and acidic residues: residues 334-355 (FNRREQEEERFRAQRDPLEGRR) and 434-443 (HWTKAQKGDG). 2 disordered regions span residues 334 to 512 (FNRR…RRAH) and 528 to 629 (QFRH…RRSM). The segment covering 452-481 (LPRQGPSQPLSFPENYQSLPKSTRHLSGSS) has biased composition (polar residues). Basic and acidic residues predominate over residues 494–512 (YAQDRASHLKMSSEERRAH). Phosphoserine occurs at positions 533, 542, 566, 601, 605, and 609. The segment at 535-693 (TAPIGAGSPE…AESDIDVKLS (159 aa)) is interaction with CTNND1. Positions 564-579 (PPSPSDIPPPGPPRPF) are enriched in pro residues. Over residues 586–602 (TPAERVTVKPPEQRRSV) the composition is skewed to basic and acidic residues. Positions 697–798 (EQDRILQDLE…LQEQHRRAFF (102 aa)) form a coiled coil. 2 disordered regions span residues 839–873 (KTVPLFPHPSVPSLSPTESKPALQPSPPTSPVRTP) and 886–968 (VPYR…EQGQ). Residues Ser-857 and Ser-864 each carry the phosphoserine modification. A Phosphothreonine modification is found at Thr-867. Phosphoserine occurs at positions 868, 900, and 904. The span at 930 to 939 (DQPPAVPPLP) shows a compositional bias: pro residues. Residues 955-966 (RQSDERKRDREQ) show a composition bias toward basic and acidic residues. 2 positions are modified to phosphoserine: Ser-983 and Leu-990. Residues 1003-1024 (GSESRYQTLPGRGLSGSTSRLQ) are disordered. Residues 1064-1091 (QRGKMSAEEQLERMKRHQKALVRERKRT) adopt a coiled-coil conformation.

In terms of assembly, interacts with CAMSAP3 and CTNND1. Interacts (via WW domains) with TSPAN33 (via cytoplasmic domain) and with PDZD11; the interaction with TSPAN33 is dependent on PDZD11 being bound to PLEKHA7 and facilitates the docking of ADAM10 to zonula adherens through interaction of TSPAN33 with ADAM10. Expressed in kidney and lung (at protein level).

Its subcellular location is the cell junction. It is found in the adherens junction. The protein localises to the cytoplasm. It localises to the cytoskeleton. The protein resides in the microtubule organizing center. Its subcellular location is the centrosome. In terms of biological role, required for zonula adherens biogenesis and maintenance. Acts via its interaction with CAMSAP3, which anchors microtubules at their minus-ends to zonula adherens, leading to the recruitment of KIFC3 kinesin to the junctional site. Mediates docking of ADAM10 to zonula adherens through a PDZD11-dependent interaction with the ADAM10-binding protein TSPAN33. In Mus musculus (Mouse), this protein is Pleckstrin homology domain-containing family A member 7 (Plekha7).